The primary structure comprises 425 residues: Keratin, type II cytoskeletal I (425 aa).

The tract at residues Phe-1–Leu-16 is coil 1A. The region spanning Phe-1 to Ile-296 is the IF rod domain. A linker 1 region spans residues Gln-17–Tyr-37. The interval Ile-38 to Val-129 is coil 1B. A linker 12 region spans residues His-130 to Ile-153. Positions Ile-154 to Glu-292 are coil 2. A tail region spans residues Glu-293–Tyr-425.

It belongs to the intermediate filament family. Heterotetramer of two type I and two type II keratins.

This Xenopus laevis (African clawed frog) protein is Keratin, type II cytoskeletal I.